Reading from the N-terminus, the 197-residue chain is Protein RmlC homolog (197 aa).

The active-site Proton acceptor is histidine 76. Tyrosine 140 serves as the catalytic Proton donor.

In terms of biological role, could catalyze a 3,5-epimerization. This chain is Protein RmlC homolog (rfbC), found in Streptococcus pyogenes serotype M6 (strain ATCC BAA-946 / MGAS10394).